Reading from the N-terminus, the 202-residue chain is Guanylate kinase (202 aa).

A Guanylate kinase-like domain is found at 18 to 200 (LKPVVVFGPS…AYKQLEAICL (183 aa)). 25-32 (GPSGVGKS) contacts ATP.

It belongs to the guanylate kinase family.

The catalysed reaction is GMP + ATP = GDP + ADP. Functionally, essential for recycling GMP and indirectly, cGMP. This is Guanylate kinase from Schizosaccharomyces pombe (strain 972 / ATCC 24843) (Fission yeast).